Consider the following 225-residue polypeptide: Type II restriction enzyme BslI subunit alpha (225 aa).

2 C4-type zinc fingers span residues 36–53 (CKDCGQYWHTSLSECYFC) and 63–84 (CNSCGKKYSLTSSSKSCDTDGC).

As to quaternary structure, heterotetramer of two alpha and two beta subunits. The alpha subunit is believed to be responsible for DNA recognition, while the beta subunit is thought to mediate cleavage. Requires Zn(2+) as cofactor.

The enzyme catalyses Endonucleolytic cleavage of DNA to give specific double-stranded fragments with terminal 5'-phosphates.. Its function is as follows. A P subtype restriction enzyme that recognizes the double-stranded sequence 5'-CCN(7)GG-3' and cleaves after N-7. This chain is Type II restriction enzyme BslI subunit alpha, found in Bacillus sp. (strain NEB-606).